The following is a 494-amino-acid chain: Guanosine-5'-triphosphate,3'-diphosphate pyrophosphatase (494 aa).

This sequence belongs to the GppA/Ppx family. GppA subfamily.

It carries out the reaction guanosine 3'-diphosphate 5'-triphosphate + H2O = guanosine 3',5'-bis(diphosphate) + phosphate + H(+). It participates in purine metabolism; ppGpp biosynthesis; ppGpp from GTP: step 2/2. Functionally, catalyzes the conversion of pppGpp to ppGpp. Guanosine pentaphosphate (pppGpp) is a cytoplasmic signaling molecule which together with ppGpp controls the 'stringent response', an adaptive process that allows bacteria to respond to amino acid starvation, resulting in the coordinated regulation of numerous cellular activities. The polypeptide is Guanosine-5'-triphosphate,3'-diphosphate pyrophosphatase (Erwinia tasmaniensis (strain DSM 17950 / CFBP 7177 / CIP 109463 / NCPPB 4357 / Et1/99)).